The primary structure comprises 219 residues: Lipid transferase CIDEB (219 aa).

Residues 34-110 form the CIDE-N domain; it reads PQRPFRVCDH…VLQSGQSWSP (77 aa).

Belongs to the CIDE family. As to quaternary structure, interacts with DFFA. Interacts with DFFB; inhibited by DFFB. Interacts with APOB. Interacts with PREB/SEC12; facilitating loading of SCAP-SREBP into COPII vesicles. In terms of assembly, (Microbial infection) Interacts (via N-terminus) with HCV non-structural protein 5A (via N-terminus); this interaction seems to regulate the association of HCV particles with ApoE. In terms of tissue distribution, highly expressed in liver and small intestine and, at lower levels, in colon, kidney and spleen.

It localises to the lipid droplet. The protein resides in the endoplasmic reticulum membrane. It is found in the golgi apparatus. Its subcellular location is the cytoplasmic vesicle. The protein localises to the COPI-coated vesicle. Its function is as follows. Lipid transferase specifically expressed in hepatocytes, which promotes unilocular lipid droplet formation by mediating lipid droplet fusion. Lipid droplet fusion promotes their enlargement, restricting lipolysis and favoring lipid storage. Localizes on the lipid droplet surface, at focal contact sites between lipid droplets, and mediates atypical lipid droplet fusion by promoting directional net neutral lipid transfer from the smaller to larger lipid droplets. The transfer direction may be driven by the internal pressure difference between the contacting lipid droplet pair. Promotes lipid exchange and lipid droplet fusion in both small and large lipid droplet-containing hepatocytes. In addition to its role in lipid droplet fusion, also involved in cytoplasmic vesicle biogenesis and transport. Required for very-low-density lipoprotein (VLDL) lipidation and maturation. Probably involved in the biogenesis of VLDL transport vesicles by forming a COPII vesicle coat and facilitating the formation of endoplasmic reticulum-derived large vesicles. Also involved in sterol-regulated export of the SCAP-SREBP complex, composed of SCAP, SREBF1/SREBP1 and SREBF2/SREBP2, by promoting loading of SCAP-SREBP into COPII vesicles. May also activate apoptosis. (Microbial infection) Involved in Hepatatis C virus (HCV) assembly and required for HCV entry into hepatocytes. The protein is Lipid transferase CIDEB of Homo sapiens (Human).